The primary structure comprises 286 residues: MISSKTSFIALIGNPVSHSLSPIMQNAALQYLGLDLIYIAVPCKDEDLELVLNSFKKINCKGLNITIPHKEKVLTLCSEISPIANKLKAINTLKLNSEKKWSATNTDVEGFIYPLKNLNLAKKKSIVLGSGGAARSVIQGLINLNLSTISVISRNKSSLDELIKNFGNEIQLQGLLNSDDQAQVLIREADLIVNTTPAGMKTTKYKNNVMPYGETFWRSLNSQTIVYDLIYNPAPTTLLKFSARKGCKTIDGLEMLVAQGIKSLSFWTDGLEVPFHVMNDALKKYL.

Residues 19 to 21 and T66 contribute to the shikimate site; that span reads SLS. The active-site Proton acceptor is the K70. Residues N91 and D107 each contribute to the shikimate site. NADP(+) is bound by residues 129–133 and L229; that span reads GSGGA. Y231 provides a ligand contact to shikimate. G252 serves as a coordination point for NADP(+).

The protein belongs to the shikimate dehydrogenase family. Homodimer.

It carries out the reaction shikimate + NADP(+) = 3-dehydroshikimate + NADPH + H(+). Its pathway is metabolic intermediate biosynthesis; chorismate biosynthesis; chorismate from D-erythrose 4-phosphate and phosphoenolpyruvate: step 4/7. In terms of biological role, involved in the biosynthesis of the chorismate, which leads to the biosynthesis of aromatic amino acids. Catalyzes the reversible NADPH linked reduction of 3-dehydroshikimate (DHSA) to yield shikimate (SA). In Prochlorococcus marinus (strain AS9601), this protein is Shikimate dehydrogenase (NADP(+)).